The sequence spans 238 residues: Urease accessory protein UreG (238 aa).

Over residues 1–15 (MPPHLIDGEPHDHAH) the composition is skewed to basic and acidic residues. The tract at residues 1–27 (MPPHLIDGEPHDHAHDRPKRQRTPGEP) is disordered. GTP is bound at residue 34 to 41 (GPVGSGKT).

The protein belongs to the SIMIBI class G3E GTPase family. UreG subfamily. Homodimer. UreD, UreF and UreG form a complex that acts as a GTP-hydrolysis-dependent molecular chaperone, activating the urease apoprotein by helping to assemble the nickel containing metallocenter of UreC. The UreE protein probably delivers the nickel.

Its subcellular location is the cytoplasm. Functionally, facilitates the functional incorporation of the urease nickel metallocenter. This process requires GTP hydrolysis, probably effectuated by UreG. The polypeptide is Urease accessory protein UreG (Nocardia farcinica (strain IFM 10152)).